The following is a 908-amino-acid chain: Probable disease resistance RPP8-like protein 4 (908 aa).

Residues 15–57 adopt a coiled-coil conformation; it reads DLLSRESERLQGIDEQLDGLKRQLRSLQSLLKDADAKKHGSDR. In terms of domain architecture, NB-ARC spans 146 to 459; sequence RQRVQREIRQ…AEGIYDGSTI (314 aa). 192-199 contacts ATP; the sequence is GMGGIGKT. LRR repeat units lie at residues 575 to 599, 600 to 623, and 842 to 867; these read LTLLRVLDLSRVKFEGGKLPSSIGG, LIHLRYLSLYGAVVSHLPSTMRNL, and MPCLRTLTIHDCEKLKELPDGLKYIT.

It belongs to the disease resistance NB-LRR family. RPP8/HRT subfamily.

In terms of biological role, potential disease resistance protein. This chain is Probable disease resistance RPP8-like protein 4 (RPP8L4), found in Arabidopsis thaliana (Mouse-ear cress).